Consider the following 286-residue polypeptide: Shikimate dehydrogenase (NADP(+)) (286 aa).

Shikimate is bound by residues 20-22 (SLS) and T67. The active-site Proton acceptor is the K71. Shikimate-binding residues include N92 and D107. NADP(+) is bound by residues 132–136 (GAGGA) and M228. Y230 serves as a coordination point for shikimate. G251 provides a ligand contact to NADP(+).

Belongs to the shikimate dehydrogenase family. Homodimer.

The enzyme catalyses shikimate + NADP(+) = 3-dehydroshikimate + NADPH + H(+). It functions in the pathway metabolic intermediate biosynthesis; chorismate biosynthesis; chorismate from D-erythrose 4-phosphate and phosphoenolpyruvate: step 4/7. In terms of biological role, involved in the biosynthesis of the chorismate, which leads to the biosynthesis of aromatic amino acids. Catalyzes the reversible NADPH linked reduction of 3-dehydroshikimate (DHSA) to yield shikimate (SA). The protein is Shikimate dehydrogenase (NADP(+)) of Geobacter metallireducens (strain ATCC 53774 / DSM 7210 / GS-15).